The primary structure comprises 240 residues: Transcriptional regulatory protein ResD (240 aa).

The region spanning 8–121 (KILVVDDEAR…EVVLRVKALL (114 aa)) is the Response regulatory domain. The residue at position 57 (D57) is a 4-aspartylphosphate. The segment at residues 137-237 (KNVLVFSHLS…VWGVGYKFEV (101 aa)) is a DNA-binding region (ompR/PhoB-type).

Interacts with the RNA polymerase core. Phosphorylated by ResE.

It is found in the cytoplasm. Member of the two-component regulatory system ResD/ResE. Required for the expression of resA, ctaA, qcrABC and fnr; activation role in global regulation of aerobic and anaerobic respiration. This Bacillus subtilis (strain 168) protein is Transcriptional regulatory protein ResD (resD).